The following is a 756-amino-acid chain: MYDPQFEKYNQLLKLKEKADKAYYNGVGDPIMSDEEYDNLVDYMDELNPDGGVKTKVGASPSRSKSVKLPMPMNSLDKIKTQHEFDNWMKNWKPKAMLLVKEKLDGVSCLAVFTLEQNKPPKIELFTRGDGTTGTNITRLLNHGLKVGNDYCFDDMVNEDKWTTDWGCYLNAEAIDHWKKLPVKKVYIRGELIVTRKNFQTWYSNRFMNARNLVSGQVNKKSPDPKILQDIDFVPYDLVIDLKRPTMTHEVEHLLFRMIGATPVYTRFLFLSDTISTESMADYLERRKEKSDYEIDGLVIQVDDDTLFAPPDNRNPKDTVAFKIMGTTARTTVTHVEWNLSKGSKYKPTIHITPVSLSGVTISKVTGFHGKYISENKIGKGAVVLITRSGEVIPHIVSVISPAAKQDVLLPSNGVWKGVDIYYDGAEEPREITVKKMVHFFTSLGCLGLKTMTVGRLYDAGYRTVEAIVGADTKKLVLINGFRMVAQKLLPSMWVNVAKATPHELMAALNAFGEGIGLRKIQNIDCSKPEALEVIGMTKKTVETRIWPIWNDVLARVNALSRMAKSQLRKQETGSCEPEEDDDYNFGSYHPCHMPCQSSNKIWECRSRSPSAAGSASPCRPTKRRDDWFDSSESSCATETCVVESPPKKRPPMQGYVFVFTRFRDKDLERQITALGGKVLNNVNQNVTHVITKEKGPYKKPYTGKLKFALDNNLFVWSLVHLKSIVADEQEKLKRQRKCRARSPSPCGTACSTERD.

The active-site N6-AMP-lysine intermediate is the Lys103. Low complexity predominate over residues 610–620; the sequence is PSAAGSASPCR. The interval 610 to 630 is disordered; it reads PSAAGSASPCRPTKRRDDWFD. The 95-residue stretch at 648–742 folds into the BRCT domain; the sequence is KKRPPMQGYV…LKRQRKCRAR (95 aa).

The protein belongs to the NAD-dependent DNA ligase family.

The enzyme catalyses NAD(+) + (deoxyribonucleotide)n-3'-hydroxyl + 5'-phospho-(deoxyribonucleotide)m = (deoxyribonucleotide)n+m + AMP + beta-nicotinamide D-nucleotide.. Its function is as follows. Catalyzes the formation of phosphodiester linkages between 5'-phosphoryl and 3'-hydroxyl groups in double-stranded DNA using NAD as a coenzyme and as the energy source for the reaction. In Invertebrate iridescent virus 3 (IIV-3), this protein is Putative DNA ligase 052L.